Reading from the N-terminus, the 69-residue chain is DNA gyrase inhibitor YacG (69 aa).

Cys-13, Cys-16, Cys-32, and Cys-36 together coordinate Zn(2+).

Belongs to the DNA gyrase inhibitor YacG family. In terms of assembly, interacts with GyrB. Zn(2+) serves as cofactor.

Inhibits all the catalytic activities of DNA gyrase by preventing its interaction with DNA. Acts by binding directly to the C-terminal domain of GyrB, which probably disrupts DNA binding by the gyrase. The chain is DNA gyrase inhibitor YacG from Neisseria meningitidis serogroup B (strain ATCC BAA-335 / MC58).